Reading from the N-terminus, the 768-residue chain is Actin filament-associated protein 1-like 1 (768 aa).

The disordered stretch occupies residues 82-145 (DLRDMPEDDG…GKSPEYISSH (64 aa)). 4 positions are modified to phosphoserine: S94, S98, S104, and S153. A disordered region spans residues 173–211 (GELKSSYNDSDAMSSSYESYDEEEEEGKSPQPRHQWPSE). The segment covering 177–190 (SSYNDSDAMSSSYE) has biased composition (low complexity). The region spanning 220 to 316 (ECRICAFLLR…WLKVIREVSK (97 aa)) is the PH 1 domain. Residues S329 and S343 each carry the phosphoserine modification. Residues 418-512 (EVPCCGYLNV…WLGLLLVEMG (95 aa)) form the PH 2 domain. A Phosphotyrosine modification is found at Y557. Residues 566 to 604 (QDEEPERPTGAQVKRHASSCSEKSHRVDPQVKVKRHASS) are disordered. Basic and acidic residues predominate over residues 587-596 (EKSHRVDPQV). Residues 611-700 (GKNRAEEDAR…VAVKERLQQS (90 aa)) are a coiled coil. Residues 705–768 (PALGLSVSSK…KAKEWEMKKT (64 aa)) are disordered. Polar residues predominate over residues 710-729 (SVSSKPKSGETANKPQNSVP). S747 is modified (phosphoserine). Over residues 759 to 768 (KAKEWEMKKT) the composition is skewed to basic and acidic residues.

In terms of assembly, interacts with CTTN. In terms of tissue distribution, expressed in breast, colon and brain. In all 3 tissues, expressed in the microvasculature (at protein level). In addition, in the breast, found in the contractile myoepithelial cell layer which surrounds the breast ducts (at protein level). In the colon, expressed in the mucous membrane and colonic crypts and in the smooth muscle cell layer which provide movement of the colon (at protein level). In the cerebellum, localized around the Purkinje neurons and the granule cells of the granular layer, but not inside cell bodies (at protein level). Outside of the cerebellar cortex, expressed in glial cells (at protein level). Highly expressed away from the cell bodies within the dentate nucleus (at protein level).

It is found in the cytoplasm. It localises to the cell projection. The protein resides in the podosome. Its subcellular location is the invadopodium. The protein localises to the cytoskeleton. It is found in the stress fiber. Its function is as follows. May be involved in podosome and invadosome formation. The protein is Actin filament-associated protein 1-like 1 (AFAP1L1) of Homo sapiens (Human).